Consider the following 331-residue polypeptide: CRISPR-associated endonuclease Cas1 (331 aa).

Mn(2+) is bound by residues Glu155, His221, and Glu236.

This sequence belongs to the CRISPR-associated endonuclease Cas1 family. In terms of assembly, homodimer, forms a heterotetramer with a Cas2 homodimer. The cofactor is Mg(2+). Mn(2+) serves as cofactor.

Functionally, CRISPR (clustered regularly interspaced short palindromic repeat), is an adaptive immune system that provides protection against mobile genetic elements (viruses, transposable elements and conjugative plasmids). CRISPR clusters contain spacers, sequences complementary to antecedent mobile elements, and target invading nucleic acids. CRISPR clusters are transcribed and processed into CRISPR RNA (crRNA). Acts as a dsDNA endonuclease. Involved in the integration of spacer DNA into the CRISPR cassette. This chain is CRISPR-associated endonuclease Cas1, found in Methanopyrus kandleri (strain AV19 / DSM 6324 / JCM 9639 / NBRC 100938).